The primary structure comprises 106 residues: Large ribosomal subunit protein uL24 (106 aa).

This sequence belongs to the universal ribosomal protein uL24 family. As to quaternary structure, part of the 50S ribosomal subunit.

In terms of biological role, one of two assembly initiator proteins, it binds directly to the 5'-end of the 23S rRNA, where it nucleates assembly of the 50S subunit. Functionally, one of the proteins that surrounds the polypeptide exit tunnel on the outside of the subunit. This chain is Large ribosomal subunit protein uL24, found in Gluconobacter oxydans (strain 621H) (Gluconobacter suboxydans).